Reading from the N-terminus, the 224-residue chain is tRNA (guanine-N(7)-)-methyltransferase (224 aa).

S-adenosyl-L-methionine-binding residues include glutamate 54, glutamate 79, glutamate 106, and aspartate 129. Residue aspartate 129 is part of the active site. Substrate contacts are provided by lysine 133 and aspartate 165.

It belongs to the class I-like SAM-binding methyltransferase superfamily. TrmB family.

The catalysed reaction is guanosine(46) in tRNA + S-adenosyl-L-methionine = N(7)-methylguanosine(46) in tRNA + S-adenosyl-L-homocysteine. The protein operates within tRNA modification; N(7)-methylguanine-tRNA biosynthesis. Its function is as follows. Catalyzes the formation of N(7)-methylguanine at position 46 (m7G46) in tRNA. The polypeptide is tRNA (guanine-N(7)-)-methyltransferase (Chlamydia caviae (strain ATCC VR-813 / DSM 19441 / 03DC25 / GPIC) (Chlamydophila caviae)).